The following is a 78-amino-acid chain: RNA-binding protein Hfq (78 aa).

Residues 10 to 69 form the Sm domain; sequence DPFLNTLRKEHVPVSIYLVNGIKLQGQIESFDQYVVLLRNTVTQMVYKHAISTVVPARAV.

The protein belongs to the Hfq family. In terms of assembly, homohexamer.

Functionally, RNA chaperone that binds small regulatory RNA (sRNAs) and mRNAs to facilitate mRNA translational regulation in response to envelope stress, environmental stress and changes in metabolite concentrations. Also binds with high specificity to tRNAs. The sequence is that of RNA-binding protein Hfq from Bordetella bronchiseptica (strain ATCC BAA-588 / NCTC 13252 / RB50) (Alcaligenes bronchisepticus).